Here is an 81-residue protein sequence, read N- to C-terminus: MNRKLLLVFLVVAMLVMQPAEAGFWSKIKDFAKKAWNSPLANELKSKALNAAKNFVSEKIGATPSEAGQIPFDEFMDVLYS.

Residues 1–22 form the signal peptide; that stretch reads MNRKLLLVFLVVAMLVMQPAEA. Positions 66 to 81 are excised as a propeptide; sequence EAGQIPFDEFMDVLYS.

It belongs to the non-disulfide-bridged peptide (NDBP) superfamily. Long chain multifunctional peptide (group 2) family. In terms of tissue distribution, expressed by the venom gland.

The protein resides in the secreted. It is found in the target cell membrane. At high concentrations, acts as a pore former in cellular membranes and causes the leakage of the cells. At submicromolar concentrations, degranulates granulocytes and has a weak hemolytic activity against human erythrocytes. Also strongly inhibits the production of superoxide anions. Has a strong antibacterial activity against Gram-negative bacteria but is less active against Gram-positive bacteria. Also has antifungal activity. The polypeptide is Probable antimicrobial peptide Con13 (Opisthacanthus cayaporum (South American scorpion)).